Consider the following 258-residue polypeptide: Hydroxyacylglutathione hydrolase (258 aa).

Zn(2+)-binding residues include histidine 55, histidine 57, aspartate 59, histidine 60, histidine 115, aspartate 132, and histidine 170.

Belongs to the metallo-beta-lactamase superfamily. Glyoxalase II family. In terms of assembly, monomer. Zn(2+) serves as cofactor.

It carries out the reaction an S-(2-hydroxyacyl)glutathione + H2O = a 2-hydroxy carboxylate + glutathione + H(+). It participates in secondary metabolite metabolism; methylglyoxal degradation; (R)-lactate from methylglyoxal: step 2/2. Functionally, thiolesterase that catalyzes the hydrolysis of S-D-lactoyl-glutathione to form glutathione and D-lactic acid. The protein is Hydroxyacylglutathione hydrolase of Shewanella denitrificans (strain OS217 / ATCC BAA-1090 / DSM 15013).